Consider the following 430-residue polypeptide: ATP-dependent protease ATPase subunit HslU (430 aa).

ATP-binding positions include Val-18, 60–65 (GVGKTE), Asp-243, Glu-308, and Arg-380.

Belongs to the ClpX chaperone family. HslU subfamily. In terms of assembly, a double ring-shaped homohexamer of HslV is capped on each side by a ring-shaped HslU homohexamer. The assembly of the HslU/HslV complex is dependent on binding of ATP.

Its subcellular location is the cytoplasm. Its function is as follows. ATPase subunit of a proteasome-like degradation complex; this subunit has chaperone activity. The binding of ATP and its subsequent hydrolysis by HslU are essential for unfolding of protein substrates subsequently hydrolyzed by HslV. HslU recognizes the N-terminal part of its protein substrates and unfolds these before they are guided to HslV for hydrolysis. The sequence is that of ATP-dependent protease ATPase subunit HslU from Caulobacter vibrioides (strain ATCC 19089 / CIP 103742 / CB 15) (Caulobacter crescentus).